Here is a 674-residue protein sequence, read N- to C-terminus: Regulator of G-protein signaling 9 (674 aa).

The region spanning Pro30–Thr105 is the DEP domain. One can recognise a G protein gamma domain in the interval Lys219 to Phe280. Positions Arg298–Tyr413 constitute an RGS domain. The segment at Ser533–Pro573 is disordered. Residues Val553 to Trp565 show a composition bias toward polar residues.

In terms of assembly, heterodimer with GNB5. Interacts with RGS7BP, leading to regulate the subcellular location of the heterodimer formed with GNB5. Component of the RGS9-1-Gbeta5 complex composed of RGS9 (RGS9-1), Gbeta5 (GNB5) and RGS9BP. Interacts with PDE6G and GNAT1. In terms of processing, retinal isoform 3 is light-dependent phosphorylated at 'Ser-478'. Phosphorylation is decreased by light exposition. Highly expressed in the caudate and putamen, lower levels found in the hypothalamus and nucleus accumbens and very low levels in cerebellum. Not expressed in globus pallidus or cingulate cortex. Isoform 2 is expressed predominantly in pineal gland and retina. Isoform 3 is expressed in retina (abundant in photoreceptors).

It localises to the membrane. In terms of biological role, inhibits signal transduction by increasing the GTPase activity of G protein alpha subunits thereby driving them into their inactive GDP-bound form. Binds to GNAT1. Involved in phototransduction; key element in the recovery phase of visual transduction. This is Regulator of G-protein signaling 9 (RGS9) from Homo sapiens (Human).